The primary structure comprises 308 residues: 34.2 kDa protein in rubredoxin operon (308 aa).

C136 and C139 form a disulfide bridge. Position 268-278 (T268–D278) interacts with FAD.

The protein belongs to the class-II pyridine nucleotide-disulfide oxidoreductase family.

The sequence is that of 34.2 kDa protein in rubredoxin operon from Clostridium pasteurianum.